Reading from the N-terminus, the 507-residue chain is tRNA (guanine(10)-N(2))-methyltransferase TRMT11 (507 aa).

Residues 459–475 (EKTKKKEQKKKSVENHL) show a composition bias toward basic and acidic residues. The interval 459–507 (EKTKKKEQKKKSVENHLKSKNNNDVINNNSNDTNSNNNCNNENNIENQK) is disordered. The span at 480–507 (NNDVINNNSNDTNSNNNCNNENNIENQK) shows a compositional bias: low complexity.

The protein belongs to the class I-like SAM-binding methyltransferase superfamily. TRM11 methyltransferase family. As to quaternary structure, part of the heterodimeric TRMT11-TRM112 methyltransferase complex; this complex forms an active tRNA methyltransferase, where TRMT112 acts as an activator of the catalytic subunit TRMT11.

It is found in the cytoplasm. The catalysed reaction is guanosine(10) in tRNA + S-adenosyl-L-methionine = N(2)-methylguanosine(10) in tRNA + S-adenosyl-L-homocysteine + H(+). In terms of biological role, catalytic subunit of the TRMT11-TRM112 methyltransferase complex, that specifically mediates the S-adenosyl-L-methionine-dependent N(2)-methylation of guanosine nucleotide at position 10 (m2G10) in tRNAs. This is one of the major tRNA (guanine-N(2))-methyltransferases. This Dictyostelium discoideum (Social amoeba) protein is tRNA (guanine(10)-N(2))-methyltransferase TRMT11 (trmt11).